A 378-amino-acid chain; its full sequence is Long-chain-fatty-acid--luciferin-component ligase (378 aa).

The protein belongs to the LuxE family.

The catalysed reaction is a long-chain fatty acid + L-cysteinyl-[protein] + ATP = an S-(long-chain fatty acyl)-L-cysteinyl-[protein] + AMP + diphosphate. It participates in lipid metabolism; fatty acid reduction for biolumincescence. In terms of biological role, acyl-protein synthetase activates tetradecanoic acid. It is a component of the fatty acid reductase complex responsible for converting tetradecanoic acid to the aldehyde which serves as substrate in the luciferase-catalyzed reaction. This Aliivibrio fischeri (Vibrio fischeri) protein is Long-chain-fatty-acid--luciferin-component ligase.